Consider the following 33-residue polypeptide: Photosystem II reaction center protein Psb30 (33 aa).

The helical transmembrane segment at 5-25 (LIVQLTSLILISIAGPIIIAL) threads the bilayer.

The protein belongs to the Psb30/Ycf12 family. As to quaternary structure, PSII is composed of 1 copy each of membrane proteins PsbA, PsbB, PsbC, PsbD, PsbE, PsbF, PsbH, PsbI, PsbJ, PsbK, PsbL, PsbM, PsbT, PsbY, PsbZ, Psb30/Ycf12, peripheral proteins of the oxygen-evolving complex and a large number of cofactors. It forms dimeric complexes.

The protein resides in the plastid. It is found in the chloroplast thylakoid membrane. In terms of biological role, a core subunit of photosystem II (PSII), probably helps stabilize the reaction center. The polypeptide is Photosystem II reaction center protein Psb30 (Euglena myxocylindracea).